We begin with the raw amino-acid sequence, 65 residues long: Hirudin-2B (65 aa).

The tract at residues 1-3 (ITY) is interaction with thrombin active site. 3 cysteine pairs are disulfide-bonded: cysteine 6/cysteine 14, cysteine 16/cysteine 28, and cysteine 22/cysteine 39. A disordered region spans residues 39–65 (CVTGEGTPKPQSHNDGDFEEIPEEYLQ). Threonine 45 carries O-linked (GalNAc...) threonine glycosylation. The interval 55–65 (DFEEIPEEYLQ) is interaction with fibrinogen-binding exosite of thrombin. Residues 55–65 (DFEEIPEEYLQ) show a composition bias toward acidic residues. The residue at position 63 (tyrosine 63) is a Sulfotyrosine.

This sequence belongs to the protease inhibitor I14 (hirudin) family.

The protein resides in the secreted. In terms of biological role, hirudin is a potent thrombin-specific protease inhibitor. It forms a stable non-covalent complex with alpha-thrombin, thereby abolishing its ability to cleave fibrinogen. The protein is Hirudin-2B of Hirudo medicinalis (Medicinal leech).